The primary structure comprises 629 residues: Natural resistance-associated macrophage protein 2 homolog (629 aa).

The Cytoplasmic segment spans residues 1–151 (MNNNNNNKKL…KSKFSIKKLK (151 aa)). The disordered stretch occupies residues 50–119 (NVVNGSIEDS…SDIDSSGDSI (70 aa)). Over residues 62–85 (QQQQQQQQQQQQQQQQQQQQQQQQ) the composition is skewed to low complexity. Residues 96 to 105 (DKPFQDRDSN) are compositionally biased toward basic and acidic residues. Residues 106 to 118 (IGDGSDIDSSGDS) show a composition bias toward low complexity. Residues 152 to 172 (SFLGPALFISVGYMDPGNWAT) form a helical membrane-spanning segment. The Extracellular portion of the chain corresponds to 173-182 (DLEGGSRFGY). Residues 183–203 (QLMWVLLFSNIMALFLQTLVI) form a helical membrane-spanning segment. The Cytoplasmic portion of the chain corresponds to 204–224 (KLALVTKNDLAQQCRKEYSKT). The helical transmembrane segment at 225 to 245 (VNIFLWLILELAIISTDLAEV) threads the bilayer. Over 246–253 (IGTAIGLN) the chain is Extracellular. A helical membrane pass occupies residues 254-274 (ILFGLPLIAGVAITSLDTLLF). The Cytoplasmic portion of the chain corresponds to 275 to 286 (LAIQRWGIRKLE). Residues 287–307 (LLILLLLSMITMCFVIELFLS) form a helical membrane-spanning segment. Topologically, residues 308–326 (KPIASEVFSGFVPRLNSDS) are extracellular. Residues 327-347 (VMVATGIVGATTMPHNLFLHG) traverse the membrane as a helical segment. The Cytoplasmic portion of the chain corresponds to 348-376 (SVVKSRKIPNDRRKSVIKQAYRYNVIDTV). The chain crosses the membrane as a helical span at residues 377-397 (LALNCAFFVNIAILMLAASVF). Over 398–421 (WKSNIQVTELSEAYRLLTKLMDGK) the chain is Extracellular. Residues 422–442 (LAAVLFGLGLFLAGQSSTITG) form a helical membrane-spanning segment. At 443–468 (TMAGQIVMEGFIKLRIKPWLRRFITR) the chain is on the cytoplasmic side. Residues 469 to 489 (LLAIIPAAIVIIVLGDKGTYT) traverse the membrane as a helical segment. The Extracellular portion of the chain corresponds to 490–491 (LL). A helical membrane pass occupies residues 492-512 (IISQVLLSIGLPFAVVPLIIF). The Cytoplasmic portion of the chain corresponds to 513-527 (TSSYEIMGEFKNRLS). Residues 528-548 (IIIINSIIALFIIGLNLATIF) form a helical membrane-spanning segment. Topologically, residues 549-565 (QLINDFLHNDSIISKCL) are extracellular. N-linked (GlcNAc...) asparagine glycosylation occurs at N557. A helical transmembrane segment spans residues 566 to 586 (TIIFLIPLSIALCCLLLWLII). Topologically, residues 587–629 (SKINFFTNLLSKIFNNNNNNNNKNIINNNNNYSGNTINNQTIQ) are cytoplasmic.

Belongs to the NRAMP family.

It is found in the cell membrane. Divalent transition metal (iron and manganese) transporter. This Dictyostelium discoideum (Social amoeba) protein is Natural resistance-associated macrophage protein 2 homolog (nramp2).